The primary structure comprises 512 residues: Reduced folate transporter (512 aa).

Met1 bears the N-acetylmethionine mark. The Cytoplasmic portion of the chain corresponds to 1 to 29; sequence MVPTGQVAEKQAYEEPRQDHELKSWRCLV. The helical transmembrane segment at 30–50 threads the bilayer; it reads FYLCFFGFMAQLRPGESFITP. Positions 48 and 49 each coordinate folate. Topologically, residues 51 to 62 are extracellular; that stretch reads FLLERKFTKEQV. The helical transmembrane segment at 63–85 threads the bilayer; it reads TNEIIPMLPYSHLAVLVPVFLLT. Residues 86-89 lie on the Cytoplasmic side of the membrane; it reads DYLR. Residues 90–110 form a helical membrane-spanning segment; sequence YKPVLVLQCLSFVCVWLLLLL. Over 111-114 the chain is Extracellular; that stretch reads GTSV. Residues 115–137 form a helical membrane-spanning segment; the sequence is VHMQLMEVFYSVTMAARIAYSSY. The folate site is built by Glu121 and Arg131. Residues 138–151 lie on the Cytoplasmic side of the membrane; it reads IFSLVHPSRYQRMA. A helical transmembrane segment spans residues 152 to 176; sequence SYSRAAVLLGVFISSVLGQALVTVG. Val162 is a folate binding site. Topologically, residues 177–181 are extracellular; sequence HISTY. The chain crosses the membrane as a helical span at residues 182–200; that stretch reads TLNCVSLGFILFSLVLSLF. The Cytoplasmic segment spans residues 201–266; sequence LKRPKRSLFF…ELVENARQPQ (66 aa). The chain crosses the membrane as a helical span at residues 267–292; sequence LRLWCLWWVFNSSGYYLITYYVHVLW. Folate-binding residues include Tyr281, Tyr282, and Tyr286. The Extracellular segment spans residues 293–300; sequence RSTDSSLS. Residues 301 to 323 traverse the membrane as a helical segment; it reads YNGAVDAASTLLSAITSFSAGFL. Over 324–329 the chain is Cytoplasmic; that stretch reads SIRWTL. A helical membrane pass occupies residues 330–350; sequence WSKLVIAGVIAIQASLVFCMF. Residues 351-353 lie on the Extracellular side of the membrane; sequence QIR. The helical transmembrane segment at 354–377 threads the bilayer; that stretch reads DIWVCYVTFVLFRGAYQFLVPIAT. Residues Arg366 and Gln370 each coordinate folate. Over 378 to 391 the chain is Cytoplasmic; that stretch reads FQIASSLSKELCAL. A helical membrane pass occupies residues 392 to 415; it reads VFGINTFLATALKTCITLVVSDKR. Residues 400 to 412 are required for substrate-binding; it reads ATALKTCITLVVS. The Extracellular portion of the chain corresponds to 416–423; that stretch reads GLGLQVRD. The helical transmembrane segment at 424-448 threads the bilayer; that stretch reads QFRIYFIYFLMLSITCFAWAGLDGL. Residues 449–512 are Cytoplasmic-facing; it reads RYCQRGRHQP…RGDLRVEAKA (64 aa). Ser467, Ser472, and Ser477 each carry phosphoserine. The disordered stretch occupies residues 478 to 512; the sequence is LQDGDLRGPQPSAPQLLSEDGMEDDRGDLRVEAKA.

It belongs to the reduced folate carrier (RFC) transporter (TC 2.A.48) family.

The protein resides in the cell membrane. It localises to the apical cell membrane. The protein localises to the basolateral cell membrane. The catalysed reaction is 5-amino-1-(5-phospho-beta-D-ribosyl)imidazole-4-carboxamide(in) + (6S)-5-methyl-5,6,7,8-tetrahydrofolate(out) = 5-amino-1-(5-phospho-beta-D-ribosyl)imidazole-4-carboxamide(out) + (6S)-5-methyl-5,6,7,8-tetrahydrofolate(in). Its function is as follows. Antiporter that mediates the import of reduced folates, driven by the export of organic anions. Also acts as an importer of immunoreactive cyclic dinucleotides, but with a lower transporter activity. Mechanistically, acts as a secondary active transporter, which exports intracellular organic anions down their concentration gradients to facilitate the uptake of its substrates. Has high affinity for N5-methyltetrahydrofolate, the predominant circulating form of folate. Also mediates the import of antifolate drug methotrexate. 5-amino-4-imidazolecarboxamide riboside (AICAR), when phosphorylated to AICAR monophosphate, can serve as an organic anion for antiporter activity. The polypeptide is Reduced folate transporter (Mus musculus (Mouse)).